We begin with the raw amino-acid sequence, 202 residues long: ATP-dependent Clp protease proteolytic subunit 1 (202 aa).

The active-site Nucleophile is S101. H126 is a catalytic residue.

This sequence belongs to the peptidase S14 family. As to quaternary structure, fourteen ClpP subunits assemble into 2 heptameric rings which stack back to back to give a disk-like structure with a central cavity, resembling the structure of eukaryotic proteasomes.

It is found in the cytoplasm. The enzyme catalyses Hydrolysis of proteins to small peptides in the presence of ATP and magnesium. alpha-casein is the usual test substrate. In the absence of ATP, only oligopeptides shorter than five residues are hydrolyzed (such as succinyl-Leu-Tyr-|-NHMec, and Leu-Tyr-Leu-|-Tyr-Trp, in which cleavage of the -Tyr-|-Leu- and -Tyr-|-Trp bonds also occurs).. In terms of biological role, cleaves peptides in various proteins in a process that requires ATP hydrolysis. Has a chymotrypsin-like activity. Plays a major role in the degradation of misfolded proteins. The chain is ATP-dependent Clp protease proteolytic subunit 1 from Rhizobium etli (strain ATCC 51251 / DSM 11541 / JCM 21823 / NBRC 15573 / CFN 42).